The chain runs to 138 residues: Basic phospholipase A2 PL-X' (138 aa).

Residues 1–16 form the signal peptide; the sequence is MRTLWIMAVLLVGVEG. 7 cysteine pairs are disulfide-bonded: Cys42–Cys131, Cys44–Cys60, Cys59–Cys111, Cys65–Cys138, Cys66–Cys104, Cys73–Cys97, and Cys91–Cys102. Residues Tyr43, Gly45, and Gly47 each coordinate Ca(2+). His63 is a catalytic residue. Position 64 (Asp64) interacts with Ca(2+). Asp105 is an active-site residue.

This sequence belongs to the phospholipase A2 family. Group II subfamily. D49 sub-subfamily. It depends on Ca(2+) as a cofactor. As to expression, expressed by the venom gland.

The protein localises to the secreted. The enzyme catalyses a 1,2-diacyl-sn-glycero-3-phosphocholine + H2O = a 1-acyl-sn-glycero-3-phosphocholine + a fatty acid + H(+). In terms of biological role, PLA2 catalyzes the calcium-dependent hydrolysis of the 2-acyl groups in 3-sn-phosphoglycerides. The protein is Basic phospholipase A2 PL-X' of Protobothrops flavoviridis (Habu).